A 94-amino-acid polypeptide reads, in one-letter code: Integration host factor subunit beta (94 aa).

This sequence belongs to the bacterial histone-like protein family. In terms of assembly, heterodimer of an alpha and a beta chain.

Functionally, this protein is one of the two subunits of integration host factor, a specific DNA-binding protein that functions in genetic recombination as well as in transcriptional and translational control. This chain is Integration host factor subunit beta, found in Mesorhizobium japonicum (strain LMG 29417 / CECT 9101 / MAFF 303099) (Mesorhizobium loti (strain MAFF 303099)).